A 279-amino-acid chain; its full sequence is MDRELVMRFLGTGGAVPSKDRSHPGLLVEFSGTKLLIDCGEGTQRRAMEQGVTIHDVDAVLLTHHHVDHVAGLLPLATTVDLLHGRRLKVYGPTAGSESALDISDLEVIEYREVNPGDEVEIGDLRVLVYESEHGVPTVDYRIETPKIPGKADPKYIRRVPPSKRREVLLRGERPYSLTKPGKISVYVKGDGRPADPENVRGCQVLVHEACFEDHEEAVRYLHSTHLEAAEVAREAGVDLLVLTHLSTKVDPERMREEAREVFPVVVVARDGLMVRVRR.

Residues His64, His66, Asp68, His69, His134, Asp191, and His245 each contribute to the Zn(2+) site. The Proton acceptor role is filled by Asp68.

This sequence belongs to the RNase Z family. In terms of assembly, homodimer. Zn(2+) is required as a cofactor.

The catalysed reaction is Endonucleolytic cleavage of RNA, removing extra 3' nucleotides from tRNA precursor, generating 3' termini of tRNAs. A 3'-hydroxy group is left at the tRNA terminus and a 5'-phosphoryl group is left at the trailer molecule.. Functionally, zinc phosphodiesterase, which displays some tRNA 3'-processing endonuclease activity. Probably involved in tRNA maturation, by removing a 3'-trailer from precursor tRNA. This is Ribonuclease Z from Methanopyrus kandleri (strain AV19 / DSM 6324 / JCM 9639 / NBRC 100938).